A 259-amino-acid polypeptide reads, in one-letter code: DNA-directed RNA polymerase 30 kDa polypeptide (259 aa).

The TFIIS-type zinc-finger motif lies at 155–195 (YNTPCPNCKSRNTTPMMIQTRAADEPPLVRHACRDCKQHFK). Cys159, Cys162, Cys187, and Cys190 together coordinate Zn(2+). Residues 220-259 (EILPDNNPSPPESPEPASPIDDGLIRATFDRNDEPPEDDE) are disordered. Residues 226–236 (NPSPPESPEPA) show a composition bias toward pro residues.

Belongs to the poxviridae DNA-directed RNA polymerase 30 kDa subunit family. As to quaternary structure, the DNA-dependent RNA polymerase (vRNAP) consists of eight subunits encoded by early viral genes and termed according to their apparent molecular masses Rpo147, Rpo132, Rpo35, Rpo30, Rpo22, Rpo19, Rpo18, and Rpo7. The same holoenzyme, with the addition of the transcription-specificity factor RAP94, is used for early gene expression.

The protein localises to the virion. It is found in the host cytoplasm. The catalysed reaction is RNA(n) + a ribonucleoside 5'-triphosphate = RNA(n+1) + diphosphate. Part of the DNA-dependent RNA polymerase which catalyzes the transcription of viral DNA into RNA using the four ribonucleoside triphosphates as substrates. Responsible for the transcription of early, intermediate and late genes. DNA-dependent RNA polymerase associates with the early transcription factor (ETF), itself composed of OPG118 and OPG134, thereby allowing the early genes transcription. Late transcription, and probably also intermediate transcription, require newly synthesized RNA polymerase. The sequence is that of DNA-directed RNA polymerase 30 kDa polypeptide (OPG066) from Monkeypox virus.